The chain runs to 254 residues: Undecaprenyl-diphosphatase 3 (254 aa).

Helical transmembrane passes span Thr-8–Phe-28, Ala-33–Trp-53, Leu-74–Ile-94, Val-97–Val-117, Ile-133–Phe-153, Ala-174–Ile-194, Leu-207–Leu-227, and Val-233–Ile-253.

Belongs to the UppP family.

It is found in the cell membrane. It carries out the reaction di-trans,octa-cis-undecaprenyl diphosphate + H2O = di-trans,octa-cis-undecaprenyl phosphate + phosphate + H(+). Its function is as follows. Catalyzes the dephosphorylation of undecaprenyl diphosphate (UPP). Confers resistance to bacitracin. In Bacillus thuringiensis (strain Al Hakam), this protein is Undecaprenyl-diphosphatase 3.